The sequence spans 1313 residues: Inactive protein tyrosine kinase pTKL (1313 aa).

MORN repeat units follow at residues 20–42 and 45–63; these read YAGDLNVDNLPHGRGLMLYENGN and FGHFINGKKHGKGIYIDKN. Residues Asn-63, Asn-131, Asn-178, Asn-208, Asn-254, Asn-260, and Asn-288 are each glycosylated (N-linked (GlcNAc...) asparagine). The 66-residue stretch at 300-365 folds into the SAM domain; the sequence is WNKEQVAQWL…LQLIKNLRVT (66 aa). 5 N-linked (GlcNAc...) asparagine glycosylation sites follow: Asn-466, Asn-516, Asn-525, Asn-528, and Asn-534. The segment covering 569–580 has biased composition (basic and acidic residues); that stretch reads EPIKPNKEKEEN. Positions 569–631 are disordered; the sequence is EPIKPNKEKE…SEKSSETSSE (63 aa). Over residues 586–604 the composition is skewed to polar residues; sequence PIINSKNETNLLNDSNPTK. Asn-592, Asn-598, Asn-661, Asn-678, Asn-729, Asn-735, and Asn-749 each carry an N-linked (GlcNAc...) asparagine glycan. Lys-782 provides a ligand contact to ATP. 5 N-linked (GlcNAc...) asparagine glycosylation sites follow: Asn-790, Asn-868, Asn-940, Asn-983, and Asn-1000. A Protein kinase domain is found at 962-1294; sequence FRNKNNILCG…FDRILIEISM (333 aa). An RVxF motif motif is present at residues 1052 to 1055; the sequence is KILF. Asn-1191 and Asn-1198 each carry an N-linked (GlcNAc...) asparagine glycan.

It belongs to the protein kinase superfamily. TKL Ser/Thr protein kinase family.

It is found in the parasitophorous vacuole. Its subcellular location is the host cell membrane. The protein localises to the host cytoplasm. It localises to the host cytoskeleton. In Plasmodium berghei (strain Anka), this protein is Inactive protein tyrosine kinase pTKL.